A 55-amino-acid polypeptide reads, in one-letter code: Large ribosomal subunit protein bL33 (55 aa).

It belongs to the bacterial ribosomal protein bL33 family.

In Novosphingobium aromaticivorans (strain ATCC 700278 / DSM 12444 / CCUG 56034 / CIP 105152 / NBRC 16084 / F199), this protein is Large ribosomal subunit protein bL33.